The following is a 179-amino-acid chain: MFEGTTIVAVKRGGEVAIGGDGQVTFGQQTVIKRRANKIRKLYRGKVLAGFAGAVADAFTLFDLFEKKLEESQGNLTRAAVELVKTWRTDKFLRRLEAMLLVADRERILLISGTGEVIEPDDGVLAIGSGGNYALAAARALINHTNLSAREIVMESLKIAQEICVYTNDFITVETIGGE.

Thr5 is a catalytic residue. 2 residues coordinate Na(+): Cys164 and Thr167.

Belongs to the peptidase T1B family. HslV subfamily. A double ring-shaped homohexamer of HslV is capped on each side by a ring-shaped HslU homohexamer. The assembly of the HslU/HslV complex is dependent on binding of ATP.

The protein resides in the cytoplasm. The enzyme catalyses ATP-dependent cleavage of peptide bonds with broad specificity.. Its activity is regulated as follows. Allosterically activated by HslU binding. In terms of biological role, protease subunit of a proteasome-like degradation complex believed to be a general protein degrading machinery. This Carboxydothermus hydrogenoformans (strain ATCC BAA-161 / DSM 6008 / Z-2901) protein is ATP-dependent protease subunit HslV.